A 336-amino-acid chain; its full sequence is Heme A synthase (336 aa).

8 helical membrane-spanning segments follow: residues 5–25 (LTRW…VGGI), 92–112 (GRAT…KGII), 117–137 (ILSY…GWYM), 153–173 (LAFH…KLVK), 191–211 (LIFS…GALV), 253–273 (FIHR…IISL), 284–304 (VAFY…ITLL), and 307–327 (VPII…SVVI). Position 255 (H255) interacts with heme. H315 contributes to the heme binding site.

Belongs to the COX15/CtaA family. Type 2 subfamily. Interacts with CtaB. Heme b serves as cofactor.

Its subcellular location is the cell membrane. It catalyses the reaction Fe(II)-heme o + 2 A + H2O = Fe(II)-heme a + 2 AH2. Its pathway is porphyrin-containing compound metabolism; heme A biosynthesis; heme A from heme O: step 1/1. Its function is as follows. Catalyzes the conversion of heme O to heme A by two successive hydroxylations of the methyl group at C8. The first hydroxylation forms heme I, the second hydroxylation results in an unstable dihydroxymethyl group, which spontaneously dehydrates, resulting in the formyl group of heme A. The chain is Heme A synthase from Rickettsia bellii (strain RML369-C).